The following is an 835-amino-acid chain: Protein translocase subunit SecA (835 aa).

Residues glutamine 85, 103–107 (GEGKT), and aspartate 492 each bind ATP. Positions 819, 821, 830, and 831 each coordinate Zn(2+).

It belongs to the SecA family. In terms of assembly, monomer and homodimer. Part of the essential Sec protein translocation apparatus which comprises SecA, SecYEG and auxiliary proteins SecDF. Other proteins may also be involved. Zn(2+) is required as a cofactor.

The protein resides in the cell membrane. It is found in the cytoplasm. It carries out the reaction ATP + H2O + cellular proteinSide 1 = ADP + phosphate + cellular proteinSide 2.. In terms of biological role, part of the Sec protein translocase complex. Interacts with the SecYEG preprotein conducting channel. Has a central role in coupling the hydrolysis of ATP to the transfer of proteins into and across the cell membrane, serving as an ATP-driven molecular motor driving the stepwise translocation of polypeptide chains across the membrane. This chain is Protein translocase subunit SecA, found in Clostridium botulinum (strain Loch Maree / Type A3).